The primary structure comprises 227 residues: PKHD-type hydroxylase Bphyt_7102 (227 aa).

One can recognise a Fe2OG dioxygenase domain in the interval 80 to 179; it reads QVYPPLFNRY…RIASFFWVQS (100 aa). Residues His98, Asp100, and His160 each contribute to the Fe cation site. Position 170 (Arg170) interacts with 2-oxoglutarate.

It depends on Fe(2+) as a cofactor. The cofactor is L-ascorbate.

The polypeptide is PKHD-type hydroxylase Bphyt_7102 (Paraburkholderia phytofirmans (strain DSM 17436 / LMG 22146 / PsJN) (Burkholderia phytofirmans)).